Reading from the N-terminus, the 431-residue chain is Pachytene checkpoint protein 2 homolog (431 aa).

M1 is modified (N-acetylmethionine). ATP is bound at residue 179-186 (GPPGTGKT).

This sequence belongs to the AAA ATPase family. PCH2 subfamily. As to quaternary structure, specifically interacts with the ligand binding domain of the thyroid receptor (TR). This interaction does not require the presence of thyroid hormone for its interaction. Interacts with proteasome subunit PSMA8; to participate in meiosis progression during spermatogenesis.

Functionally, plays a key role in chromosome recombination and chromosome structure development during meiosis. Required at early steps in meiotic recombination that leads to non-crossovers pathways. Also needed for efficient completion of homologous synapsis by influencing crossover distribution along the chromosomes affecting both crossovers and non-crossovers pathways. Also required for development of higher-order chromosome structures and is needed for synaptonemal-complex formation. In males, required for efficient synapsis of the sex chromosomes and for sex body formation. Promotes early steps of the DNA double-strand breaks (DSBs) repair process upstream of the assembly of RAD51 complexes. Required for depletion of HORMAD1 and HORMAD2 from synapsed chromosomes. Plays a role in mitotic spindle assembly checkpoint (SAC) activation. In Sus scrofa (Pig), this protein is Pachytene checkpoint protein 2 homolog (TRIP13).